The chain runs to 293 residues: Elongation factor Ts (293 aa).

The segment at 81 to 84 (TDFV) is involved in Mg(2+) ion dislocation from EF-Tu.

This sequence belongs to the EF-Ts family.

The protein localises to the cytoplasm. In terms of biological role, associates with the EF-Tu.GDP complex and induces the exchange of GDP to GTP. It remains bound to the aminoacyl-tRNA.EF-Tu.GTP complex up to the GTP hydrolysis stage on the ribosome. This is Elongation factor Ts from Methylococcus capsulatus (strain ATCC 33009 / NCIMB 11132 / Bath).